The following is a 640-amino-acid chain: Chaperone protein DnaK (640 aa).

Threonine 196 is modified (phosphothreonine; by autocatalysis). Disordered regions lie at residues 487 to 526 (GKEQ…KEEI) and 593 to 640 (SHLY…GNDK). The segment covering 501-526 (TDAEISKMKEDAKEHAAEDQKRKEEI) has biased composition (basic and acidic residues). Polar residues predominate over residues 595-613 (LYQSQGPESSQPETAAQSD). Over residues 630-640 (AEYEVIDGNDK) the composition is skewed to acidic residues.

It belongs to the heat shock protein 70 family.

Its function is as follows. Acts as a chaperone. The polypeptide is Chaperone protein DnaK (Pelodictyon phaeoclathratiforme (strain DSM 5477 / BU-1)).